A 35-amino-acid polypeptide reads, in one-letter code: Cupiennin-1d (35 aa).

Position 35 is a glutamic acid 1-amide (E35).

This sequence belongs to the cationic peptide 04 (cupiennin) family. 01 subfamily. As to expression, expressed by the venom gland.

The protein resides in the secreted. Has antimicrobial activity against B.subtilis, E.coli, E.faecalis, P.aeruginosa, and S.aureus. Has insecticidal and hemolytic activities. Probably acts by disturbing membrane function with its amphipathic structure. This chain is Cupiennin-1d, found in Cupiennius salei (American wandering spider).